Consider the following 300-residue polypeptide: Probable phytol kinase, chloroplastic (300 aa).

Residues 1–36 (MAAARPALPSSPTSLLLARSTSAPDLAARRPRRWLV) constitute a chloroplast transit peptide. The next 7 membrane-spanning stretches (helical) occupy residues 60-78 (LLRDGGATLLVTAGAYSLV), 98-118 (VVHVLSGVFFMASWPLFSNST), 122-142 (FFAAVVPFLNCVRLLTYGLGF), 168-188 (YVIVLLIIVLVFWRDSPIGIV), 227-247 (FISGFLLSALMLSYFSWLGYI), 254-274 (ALGKLVLVALAATVVECIPVT), and 276-296 (VVDDNISVPLATMLVAFLLFG).

It belongs to the polyprenol kinase family.

Its subcellular location is the plastid. It localises to the chloroplast membrane. It catalyses the reaction phytol + CTP = phytyl phosphate + CDP + H(+). It functions in the pathway cofactor biosynthesis; tocopherol biosynthesis. Its function is as follows. Involved in the activation and reutilization of phytol from chlorophyll degradation in plant metabolism, including tocopherol biosynthesis. Catalyzes the conversion of phytol to phytol monophosphate (PMP). The sequence is that of Probable phytol kinase, chloroplastic from Triticum aestivum (Wheat).